Here is a 227-residue protein sequence, read N- to C-terminus: Cytochrome c oxidase subunit 2 (227 aa).

The Mitochondrial intermembrane portion of the chain corresponds to 1 to 14; sequence MAYPLQLGFQDASS. The chain crosses the membrane as a helical span at residues 15–45; that stretch reads PIMEELLHFHDHTLMIVFLISSLVLYIISLM. Topologically, residues 46–59 are mitochondrial matrix; it reads LTTKLTHTSTMDAQ. The chain crosses the membrane as a helical span at residues 60–87; that stretch reads EVETIWTILPAIILILIALPSLRILYMM. The Mitochondrial intermembrane segment spans residues 88–227; it reads DEINNPSLTV…HFENWTTTML (140 aa). Histidine 161, cysteine 196, glutamate 198, cysteine 200, histidine 204, and methionine 207 together coordinate Cu cation. Mg(2+) is bound at residue glutamate 198.

Belongs to the cytochrome c oxidase subunit 2 family. Component of the cytochrome c oxidase (complex IV, CIV), a multisubunit enzyme composed of 14 subunits. The complex is composed of a catalytic core of 3 subunits MT-CO1, MT-CO2 and MT-CO3, encoded in the mitochondrial DNA, and 11 supernumerary subunits COX4I, COX5A, COX5B, COX6A, COX6B, COX6C, COX7A, COX7B, COX7C, COX8 and NDUFA4, which are encoded in the nuclear genome. The complex exists as a monomer or a dimer and forms supercomplexes (SCs) in the inner mitochondrial membrane with NADH-ubiquinone oxidoreductase (complex I, CI) and ubiquinol-cytochrome c oxidoreductase (cytochrome b-c1 complex, complex III, CIII), resulting in different assemblies (supercomplex SCI(1)III(2)IV(1) and megacomplex MCI(2)III(2)IV(2)). Found in a complex with TMEM177, COA6, COX18, COX20, SCO1 and SCO2. Interacts with TMEM177 in a COX20-dependent manner. Interacts with COX20. Interacts with COX16. It depends on Cu cation as a cofactor.

The protein localises to the mitochondrion inner membrane. The catalysed reaction is 4 Fe(II)-[cytochrome c] + O2 + 8 H(+)(in) = 4 Fe(III)-[cytochrome c] + 2 H2O + 4 H(+)(out). In terms of biological role, component of the cytochrome c oxidase, the last enzyme in the mitochondrial electron transport chain which drives oxidative phosphorylation. The respiratory chain contains 3 multisubunit complexes succinate dehydrogenase (complex II, CII), ubiquinol-cytochrome c oxidoreductase (cytochrome b-c1 complex, complex III, CIII) and cytochrome c oxidase (complex IV, CIV), that cooperate to transfer electrons derived from NADH and succinate to molecular oxygen, creating an electrochemical gradient over the inner membrane that drives transmembrane transport and the ATP synthase. Cytochrome c oxidase is the component of the respiratory chain that catalyzes the reduction of oxygen to water. Electrons originating from reduced cytochrome c in the intermembrane space (IMS) are transferred via the dinuclear copper A center (CU(A)) of subunit 2 and heme A of subunit 1 to the active site in subunit 1, a binuclear center (BNC) formed by heme A3 and copper B (CU(B)). The BNC reduces molecular oxygen to 2 water molecules using 4 electrons from cytochrome c in the IMS and 4 protons from the mitochondrial matrix. This Tupaia glis (Common tree shrew) protein is Cytochrome c oxidase subunit 2 (MT-CO2).